The primary structure comprises 208 residues: Interleukin-6 (208 aa).

An N-terminal signal peptide occupies residues 1 to 20; sequence MNSLSTIAFSLGLLLVTATA. Cys67 and Cys73 are joined by a disulfide. Ser76 bears the Phosphoserine mark. Cysteines 96 and 106 form a disulfide. N-linked (GlcNAc...) asparagine glycosylation occurs at Asn167.

The protein belongs to the IL-6 superfamily. Component of a hexamer of two molecules each of IL6, IL6R and IL6ST; first binds to IL6R to associate with the signaling subunit IL6ST. Interacts with IL6R (via the N-terminal ectodomain); this interaction may be affected by IL6R-binding with SORL1, hence decreasing IL6 cis signaling. Interacts with SORL1 (via the N-terminal ectodomain); this interaction leads to IL6 internalization and lysosomal degradation. May form a trimeric complex with the soluble SORL1 ectodomain and soluble IL6R receptor; this interaction might stabilize circulating IL6, hence promoting IL6 trans signaling.

It localises to the secreted. Cytokine with a wide variety of biological functions in immunity, tissue regeneration, and metabolism. Binds to IL6R, then the complex associates to the signaling subunit IL6ST/gp130 to trigger the intracellular IL6-signaling pathway. The interaction with the membrane-bound IL6R and IL6ST stimulates 'classic signaling', whereas the binding of IL6 and soluble IL6R to IL6ST stimulates 'trans-signaling'. Alternatively, 'cluster signaling' occurs when membrane-bound IL6:IL6R complexes on transmitter cells activate IL6ST receptors on neighboring receiver cells. Its function is as follows. IL6 is a potent inducer of the acute phase response. Rapid production of IL6 contributes to host defense during infection and tissue injury, but excessive IL6 synthesis is involved in disease pathology. In the innate immune response, is synthesized by myeloid cells, such as macrophages and dendritic cells, upon recognition of pathogens through toll-like receptors (TLRs) at the site of infection or tissue injury. In the adaptive immune response, is required for the differentiation of B cells into immunoglobulin-secreting cells. Plays a major role in the differentiation of CD4(+) T cell subsets. Essential factor for the development of T follicular helper (Tfh) cells that are required for the induction of germinal-center formation. Required to drive naive CD4(+) T cells to the Th17 lineage. Also required for proliferation of myeloma cells and the survival of plasmablast cells. In terms of biological role, acts as an essential factor in bone homeostasis and on vessels directly or indirectly by induction of VEGF, resulting in increased angiogenesis activity and vascular permeability. Induces, through 'trans-signaling' and synergistically with IL1B and TNF, the production of VEGF. Involved in metabolic controls, is discharged into the bloodstream after muscle contraction increasing lipolysis and improving insulin resistance. 'Trans-signaling' in central nervous system also regulates energy and glucose homeostasis. Mediates, through GLP-1, crosstalk between insulin-sensitive tissues, intestinal L cells and pancreatic islets to adapt to changes in insulin demand. Also acts as a myokine. Plays a protective role during liver injury, being required for maintenance of tissue regeneration. Also has a pivotal role in iron metabolism by regulating HAMP/hepcidin expression upon inflammation or bacterial infection. Through activation of IL6ST-YAP-NOTCH pathway, induces inflammation-induced epithelial regeneration. In Delphinapterus leucas (Beluga whale), this protein is Interleukin-6 (IL6).